Reading from the N-terminus, the 112-residue chain is MHEFSLCQSVISIAKKAAENNSKKVSKIVVKIGNLAGVDIESFEFWFPVAAKDSVLEQAKLEIIHEQAIAKCKACEHEFELTRLYEQCPNCGSFEKDILKGKDMLVESIVFN.

His-2 is a binding site for Ni(2+). Cys-72, Cys-75, Cys-88, and Cys-91 together coordinate Zn(2+).

The protein belongs to the HypA/HybF family.

Involved in the maturation of [NiFe] hydrogenases. Required for nickel insertion into the metal center of the hydrogenase. This is Hydrogenase maturation factor HypA from Francisella philomiragia subsp. philomiragia (strain ATCC 25017 / CCUG 19701 / FSC 153 / O#319-036).